The chain runs to 388 residues: Trichodiene synthase (388 aa).

Residues Asp109, Glu173, Asn234, Ser238, Glu242, and Asp248 each contribute to the Mg(2+) site. Residues 109 to 113 are aspartate-rich domain; it reads DDSRE.

Belongs to the trichodiene synthase family. Mg(2+) is required as a cofactor. It depends on Mn(2+) as a cofactor.

It catalyses the reaction (2E,6E)-farnesyl diphosphate = trichodiene + diphosphate. It functions in the pathway sesquiterpene biosynthesis; trichothecene biosynthesis. Trichodiene synthase; part of the gene cluster that mediates the production of the antimicrobial trichothecene harzianum A (HA) that plays a role in Botrytis cinerea antagonistic activity and plant defense priming. The biosynthesis of harzianum A begins with the cyclization of farnesyl diphosphate to trichodiene and is catalyzed by the trichodiene synthase TRI5. Trichodiene undergoes a series of oxygenations catalyzed by the cytochrome P450 monooxygenase TRI4. TRI4 controls the addition of 3 oxygens at C-2, C-11, and the C-12, C-13-epoxide to form the intermediate isotrichodiol. Isotrichodiol then undergoes a non-enzymatic isomerization and cyclization to form 12,13-epoxytrichothec-9-ene (EPT) which is further converted to trichodermol by the cytochrome P450 monooxygenase TRI11 via C-4 hydroxylation. The last step of HA synthesis is esterification of an octatriendioyl moiety to the C-4 oxygen of trichodermol. The octatriendioyl moiety is probably produced by the polyketide synthase TRI17 and the esterification performed by the trichothecene O-acetyltransferase TRI3. The polypeptide is Trichodiene synthase (Trichoderma arundinaceum).